A 185-amino-acid polypeptide reads, in one-letter code: Dirigent protein 12 (185 aa).

A signal peptide spans 1-25; it reads MTNQIYKQVFSFFLSVLLLQSSTVS. Cysteines 37 and 184 form a disulfide. 2 N-linked (GlcNAc...) asparagine glycosylation sites follow: asparagine 56 and asparagine 120.

It belongs to the plant dirigent protein family. Homodimer. As to expression, seed coat specific expression.

The protein resides in the secreted. The protein localises to the extracellular space. It is found in the apoplast. In terms of biological role, dirigent proteins impart stereoselectivity on the phenoxy radical-coupling reaction, yielding optically active lignans from two molecules of coniferyl alcohol in the biosynthesis of lignans, flavonolignans, and alkaloids and thus plays a central role in plant secondary metabolism. Required for seed accumulation of neolignans. This Arabidopsis thaliana (Mouse-ear cress) protein is Dirigent protein 12 (DIR12).